Here is a 397-residue protein sequence, read N- to C-terminus: Phosphoglycerate kinase (397 aa).

Residues 21 to 23, R36, 59 to 62, R119, and R152 contribute to the substrate site; these read DVN and HFGR. Residues K202, E324, and 354 to 357 contribute to the ATP site; that span reads GGDT.

This sequence belongs to the phosphoglycerate kinase family. Monomer.

The protein localises to the cytoplasm. The catalysed reaction is (2R)-3-phosphoglycerate + ATP = (2R)-3-phospho-glyceroyl phosphate + ADP. It participates in carbohydrate degradation; glycolysis; pyruvate from D-glyceraldehyde 3-phosphate: step 2/5. The chain is Phosphoglycerate kinase from Cereibacter sphaeroides (strain ATCC 17029 / ATH 2.4.9) (Rhodobacter sphaeroides).